The sequence spans 307 residues: Probable GTP 3',8-cyclase (307 aa).

One can recognise a Radical SAM core domain in the interval 4 to 222 (ALGREVRSVR…RTFHSREVYR (219 aa)). Arg-13 is a GTP binding site. Residues Cys-20 and Cys-24 each coordinate [4Fe-4S] cluster. Tyr-26 provides a ligand contact to S-adenosyl-L-methionine. Cys-27 serves as a coordination point for [4Fe-4S] cluster. A GTP-binding site is contributed by Lys-60. S-adenosyl-L-methionine is bound by residues Gly-64 and Ser-112. Lys-150 is a binding site for GTP. Cys-240 and Cys-243 together coordinate [4Fe-4S] cluster. Residue 245–247 (RIR) coordinates GTP. Cys-257 is a [4Fe-4S] cluster binding site.

Belongs to the radical SAM superfamily. MoaA family. Requires [4Fe-4S] cluster as cofactor.

It catalyses the reaction GTP + AH2 + S-adenosyl-L-methionine = (8S)-3',8-cyclo-7,8-dihydroguanosine 5'-triphosphate + 5'-deoxyadenosine + L-methionine + A + H(+). It participates in cofactor biosynthesis; molybdopterin biosynthesis. Its function is as follows. Catalyzes the cyclization of GTP to (8S)-3',8-cyclo-7,8-dihydroguanosine 5'-triphosphate. This is Probable GTP 3',8-cyclase from Methanopyrus kandleri (strain AV19 / DSM 6324 / JCM 9639 / NBRC 100938).